Reading from the N-terminus, the 180-residue chain is MNAERCEFIAGNSLIEVIPSISDDRPIHLISGDIGPFEAGVPCRIPVWTAILMKRKHNCKVVAPQWMDVDELKKILTSETESQGLAKLPDHFFEISHMLVRDAREDIFEVEAVKSLVQDIYDRRDAKLRSSAIEFLRQNQTCHAQLDNVQLIEASSARATLEACRQMGAVVRNKHESTPL.

Belongs to the GINS2/PSF2 family. Component of the GINS complex which is a heterotetramer of gins1, gins2, gins3 and gins4.

Its subcellular location is the nucleus. Its function is as follows. Required for correct functioning of the GINS complex, a complex that plays an essential role in the initiation of DNA replication, and progression of DNA replication forks. GINS complex is a core component of CDC45-MCM-GINS (CMG) helicase, the molecular machine that unwinds template DNA during replication, and around which the replisome is built. The protein is Probable DNA replication complex GINS protein PSF2 (psf-2) of Caenorhabditis elegans.